A 208-amino-acid polypeptide reads, in one-letter code: Protein DEHYDRATION-INDUCED 19 homolog 6 (208 aa).

The disordered stretch occupies residues 151 to 190; sequence VDSPRRSEADAEGHGSSSSDDQKRREQGVMDDASKEELEE. Basic and acidic residues-rich tracts occupy residues 153–163 and 170–190; these read SPRRSEADAEG and DDQKRREQGVMDDASKEELEE.

This sequence belongs to the Di19 family.

The chain is Protein DEHYDRATION-INDUCED 19 homolog 6 (DI19-6) from Oryza sativa subsp. japonica (Rice).